Here is a 278-residue protein sequence, read N- to C-terminus: HTH-type transcriptional activator RhaS (278 aa).

Residues 174–272 form the HTH araC/xylS-type domain; the sequence is NLLLAWLEDH…NWSPRDIRQG (99 aa). 2 DNA-binding regions (H-T-H motif) span residues 191–212 and 239–262; these read DAVAEQFSLSLRTLHRQLKQQT and VTDIAYRCGFSDSNHFSTLFRREF.

Binds DNA as a dimer.

Its subcellular location is the cytoplasm. Activates expression of the rhaBAD and rhaT operons. The polypeptide is HTH-type transcriptional activator RhaS (Escherichia coli (strain SE11)).